The chain runs to 266 residues: Glucosamine-6-phosphate deaminase (266 aa).

Asp-67 (proton acceptor; for enolization step) is an active-site residue. Residue Asn-139 is the For ring-opening step of the active site. The active-site Proton acceptor; for ring-opening step is His-141. Catalysis depends on Glu-146, which acts as the For ring-opening step.

It belongs to the glucosamine/galactosamine-6-phosphate isomerase family. NagB subfamily. In terms of assembly, homohexamer.

It carries out the reaction alpha-D-glucosamine 6-phosphate + H2O = beta-D-fructose 6-phosphate + NH4(+). The protein operates within amino-sugar metabolism; N-acetylneuraminate degradation; D-fructose 6-phosphate from N-acetylneuraminate: step 5/5. Functionally, catalyzes the reversible isomerization-deamination of glucosamine 6-phosphate (GlcN6P) to form fructose 6-phosphate (Fru6P) and ammonium ion. This Marinomonas sp. (strain MWYL1) protein is Glucosamine-6-phosphate deaminase.